The sequence spans 503 residues: Maturase K (503 aa).

This sequence belongs to the intron maturase 2 family. MatK subfamily.

It is found in the plastid. It localises to the chloroplast. Functionally, usually encoded in the trnK tRNA gene intron. Probably assists in splicing its own and other chloroplast group II introns. This is Maturase K from Rubus ursinus (California blackberry).